Here is a 139-residue protein sequence, read N- to C-terminus: Transcription antitermination protein NusB (139 aa).

Belongs to the NusB family.

Involved in transcription antitermination. Required for transcription of ribosomal RNA (rRNA) genes. Binds specifically to the boxA antiterminator sequence of the ribosomal RNA (rrn) operons. The chain is Transcription antitermination protein NusB from Escherichia fergusonii (strain ATCC 35469 / DSM 13698 / CCUG 18766 / IAM 14443 / JCM 21226 / LMG 7866 / NBRC 102419 / NCTC 12128 / CDC 0568-73).